The following is a 118-amino-acid chain: Large ribosomal subunit protein bL20 (118 aa).

The protein belongs to the bacterial ribosomal protein bL20 family.

Functionally, binds directly to 23S ribosomal RNA and is necessary for the in vitro assembly process of the 50S ribosomal subunit. It is not involved in the protein synthesizing functions of that subunit. The sequence is that of Large ribosomal subunit protein bL20 from Desulforamulus reducens (strain ATCC BAA-1160 / DSM 100696 / MI-1) (Desulfotomaculum reducens).